The following is a 185-amino-acid chain: Dehydrin ERD14 (185 aa).

Composition is skewed to basic and acidic residues over residues 1-13, 25-45, 52-78, and 103-134; these read MAEEIKNVPEQEV, VTDRGLFDFLGKKKDETKPEE, FEQKVHISEPEPEVKHESLLEKLHRSD, and KPTTEVEVKEEEKKGFMEKLKEKLPGHKKPED. 2 disordered regions span residues 1 to 138 and 166 to 185; these read MAEE…GSAV and EKLPGYHPKTTVEEEKKDKE. A2 is modified (N-acetylalanine). The residue at position 59 (S59) is a Phosphoserine. 2 repeat units span residues 112–132 and 154–174. Residues 112–174 form a 2 X 21 AA repeats, Lys-rich region; sequence EEEKKGFMEK…KEKLPGYHPK (63 aa).

It belongs to the plant dehydrin family. In terms of tissue distribution, in stems, cauline leaves, roots and flowers. Low levels found in maturing seeds. Absent in dry seeds.

In terms of biological role, intrinsically disordered protein acting as a chaperone. Prevents heat-induced aggregation and/or inactivation of various substrates. Binds to acidic phospholipid vesicles without affecting membrane fluidity. This is Dehydrin ERD14 (ERD14) from Arabidopsis thaliana (Mouse-ear cress).